Here is a 1484-residue protein sequence, read N- to C-terminus: Glutamate receptor ionotropic, NMDA 2B (1484 aa).

Positions 1-26 are cleaved as a signal peptide; the sequence is MKPRAECCSPKFWLVLAVLAVSGSRA. The Extracellular segment spans residues 27–555; the sequence is RSQKSPPSIG…SPSAFLEPFS (529 aa). Asparagine 74 carries N-linked (GlcNAc...) asparagine glycosylation. Cysteine 86 and cysteine 321 are oxidised to a cystine. Residues histidine 127 and glutamate 284 each coordinate Zn(2+). 4 N-linked (GlcNAc...) asparagine glycosylation sites follow: asparagine 341, asparagine 348, asparagine 444, and asparagine 491. 2 cysteine pairs are disulfide-bonded: cysteine 429–cysteine 456 and cysteine 436–cysteine 457. L-glutamate is bound by residues threonine 514 and arginine 519. A glycan (N-linked (GlcNAc...) asparagine) is linked at asparagine 542. A helical membrane pass occupies residues 556–576; sequence ADVWVMMFVMLLIVSAVAVFV. Residues 577–601 lie on the Cytoplasmic side of the membrane; it reads FEYFSPVGYNRCLADGREPGGPSFT. An intramembrane region (discontinuously helical) is located at residues 602–613; that stretch reads IGKAIWLLWGLV. A pore-forming region spans residues 604 to 623; the sequence is KAIWLLWGLVFNNSVPVQNP. The Cytoplasmic portion of the chain corresponds to 614–627; it reads FNNSVPVQNPKGTT. The chain crosses the membrane as a helical span at residues 628–647; the sequence is SKIMVSVWAFFAVIFLASYT. Over 648 to 819 the chain is Extracellular; it reads ANLAAFMIQE…SSQLDIDNMA (172 aa). Asparagine 688 carries N-linked (GlcNAc...) asparagine glycosylation. L-glutamate is bound by residues 690 to 691 and aspartate 732; that span reads ST. A helical membrane pass occupies residues 820-835; sequence GVFYMLGAAMALSLIT. The Cytoplasmic portion of the chain corresponds to 836 to 1484; sequence FICEHLFYWQ…EKLSSIESDV (649 aa). Serine 882, serine 886, serine 917, and serine 920 each carry phosphoserine. A phosphotyrosine mark is found at tyrosine 962 and tyrosine 1039. 3 positions are modified to phosphoserine: serine 1058, serine 1061, and serine 1064. The interval 1074 to 1097 is disordered; it reads EGNAAKRRKQQYKDSLKKRPASAK. Tyrosine 1109 and tyrosine 1133 each carry phosphotyrosine. Serine 1143 bears the Phosphoserine mark. Tyrosine 1155 is subject to Phosphotyrosine. The interval 1161 to 1194 is disordered; sequence DFKRDSVSGGGPCTNRSHIKHGTGDKHGVVSGVP. 2 positions are modified to phosphoserine: serine 1255 and serine 1259. A disordered region spans residues 1271–1301; sequence AVTSNASTTKYPQSPTNSKAQKKNRNKLRRQ. A compositionally biased stretch (polar residues) spans 1272 to 1289; the sequence is VTSNASTTKYPQSPTNSK. Residues 1290-1301 are compositionally biased toward basic residues; it reads AQKKNRNKLRRQ. Residues 1292–1304 are interaction with DAPK1; that stretch reads KKNRNKLRRQHSY. The residue at position 1303 (serine 1303) is a Phosphoserine; by DAPK1. Tyrosine 1474 is subject to Phosphotyrosine. The PDZ-binding signature appears at 1482–1484; it reads SDV.

It belongs to the glutamate-gated ion channel (TC 1.A.10.1) family. NR2B/GRIN2B subfamily. As to quaternary structure, heterotetramer. Forms heterotetrameric channels composed of two GluN1/zeta subunits (GRIN1), and two identical GluN2/epsilon subunits (GRIN2A, GRIN2B, GRIN2C or GRIN2D) or GluN3 subunits (GRIN3A or GRIN3B) (in vitro). Can also form heterotetrameric channels that contain at least two GluN1 subunits and at least two different GluN2 subunits (or a combination of one GluN2 and one GluN3 subunits) (in vitro). In vivo, the subunit composition may depend on the expression levels of the different subunits. Found in a complex with GRIN1 and GRIN3B. Found in a complex with GRIN1, GRIN3A and PPP2CB. Interacts with PDZ domains of PATJ, DLG3 and DLG4. Interacts with HIP1 and NETO1. Interacts with MAGI3. Interacts with DAPK1. Found in a complex with GRIN1 and PRR7. Interacts with PRR7. Interacts with CAMK2A. Interacts with ARC; preventing ARC oligomerization. Interacts with TMEM25. Interacts (via the extreme C-terminus) with FRMPD2 (via the second PDZ domain); the interaction is direct and is likely to promote NMDAR-mediated neural signal transmission. Interacts with FAM81A; the interaction facilitates condensate formation via liquid-liquid phase separation. Phosphorylated on tyrosine residues. Phosphorylation at Ser-1303 by DAPK1 enhances synaptic NMDA receptor channel activity. In terms of tissue distribution, primarily found in the fronto-parieto-temporal cortex and hippocampus pyramidal cells, lower expression in the basal ganglia.

The protein resides in the cell membrane. It localises to the postsynaptic cell membrane. Its subcellular location is the cell projection. The protein localises to the dendrite. It is found in the late endosome. The protein resides in the lysosome. It localises to the cytoplasm. Its subcellular location is the cytoskeleton. The enzyme catalyses Ca(2+)(in) = Ca(2+)(out). The catalysed reaction is Na(+)(in) = Na(+)(out). It catalyses the reaction K(+)(in) = K(+)(out). Functionally, component of N-methyl-D-aspartate (NMDA) receptors (NMDARs) that function as heterotetrameric, ligand-gated cation channels with high calcium permeability and voltage-dependent block by Mg(2+). Participates in synaptic plasticity for learning and memory formation by contributing to the long-term depression (LTD) of hippocampus membrane currents. Channel activation requires binding of the neurotransmitter L-glutamate to the GluN2 subunit, glycine or D-serine binding to the GluN1 subunit, plus membrane depolarization to eliminate channel inhibition by Mg(2+). NMDARs mediate simultaneously the potasium efflux and the influx of calcium and sodium. Each GluN2 subunit confers differential attributes to channel properties, including activation, deactivation and desensitization kinetics, pH sensitivity, Ca2(+) permeability, and binding to allosteric modulators. In concert with DAPK1 at extrasynaptic sites, acts as a central mediator for stroke damage. Its phosphorylation at Ser-1303 by DAPK1 enhances synaptic NMDA receptor channel activity inducing injurious Ca2+ influx through them, resulting in an irreversible neuronal death. The chain is Glutamate receptor ionotropic, NMDA 2B from Homo sapiens (Human).